A 44-amino-acid chain; its full sequence is Photosystem I reaction center subunit IX (44 aa).

Residues 7–27 (YLSVAPVLSTLWFGALAGLLI) traverse the membrane as a helical segment.

This sequence belongs to the PsaJ family.

The protein localises to the plastid. Its subcellular location is the chloroplast thylakoid membrane. Functionally, may help in the organization of the PsaE and PsaF subunits. This is Photosystem I reaction center subunit IX from Eucalyptus globulus subsp. globulus (Tasmanian blue gum).